The primary structure comprises 150 residues: 16.9 kDa class I heat shock protein 1 (150 aa).

Positions 1–42 (MSLVRRSNVFDPFSLDLWDPFDSVFRSVVPATSDNDTAAFAN) are important for thermostability under elevated temperature. The sHSP domain occupies 36 to 150 (DTAAFANARI…PEVKAIEISG (115 aa)).

Belongs to the small heat shock protein (HSP20) family. Forms oligomeric structures.

It is found in the cytoplasm. This Oryza sativa subsp. japonica (Rice) protein is 16.9 kDa class I heat shock protein 1 (HSP16.9A).